We begin with the raw amino-acid sequence, 305 residues long: Porphobilinogen deaminase (305 aa).

Cys-240 carries the post-translational modification S-(dipyrrolylmethanemethyl)cysteine.

It belongs to the HMBS family. As to quaternary structure, monomer. Requires dipyrromethane as cofactor.

The enzyme catalyses 4 porphobilinogen + H2O = hydroxymethylbilane + 4 NH4(+). Its pathway is porphyrin-containing compound metabolism; protoporphyrin-IX biosynthesis; coproporphyrinogen-III from 5-aminolevulinate: step 2/4. Functionally, tetrapolymerization of the monopyrrole PBG into the hydroxymethylbilane pre-uroporphyrinogen in several discrete steps. The polypeptide is Porphobilinogen deaminase (Xylella fastidiosa (strain M23)).